A 773-amino-acid chain; its full sequence is uncharacterized protein (773 aa).

The segment at 192–219 is disordered; that stretch reads EASGTNNNPKEIEMNSDTTSSVPKSGST.

The protein localises to the cytoplasm. This is an uncharacterized protein from Schizosaccharomyces pombe (strain 972 / ATCC 24843) (Fission yeast).